Reading from the N-terminus, the 214-residue chain is Coiled-coil domain-containing protein 169 (214 aa).

A coiled-coil region spans residues 56–138; sequence SEWKTRYETQ…YAFRLEQESK (83 aa). The disordered stretch occupies residues 154-214; sequence MTQVSGSNQV…RSNHLPKLNP (61 aa). 2 stretches are compositionally biased toward polar residues: residues 155-166 and 185-195; these read TQVSGSNQVSKR and HNSMNQKTTNA.

It belongs to the CCDC169 family.

The protein is Coiled-coil domain-containing protein 169 (Ccdc169) of Mus musculus (Mouse).